The chain runs to 765 residues: Putative maltooligosyl trehalose synthase (765 aa).

It belongs to the glycosyl hydrolase 13 family. Monomer.

The catalysed reaction is 4-[(1-&gt;4)-alpha-D-glucosyl](n-1)-D-glucose = 1-[(1-&gt;4)-alpha-D-glucosyl](n-1)-alpha-D-glucose. Its function is as follows. Catalyzes the conversion of maltooligosaccharide into the non-reducing saccharide, maltooligosyl trehalose (alpha-maltooligosyl alpha-D-glucoside) by intramolecular transglycosylation. The protein is Putative maltooligosyl trehalose synthase (treY) of Mycobacterium tuberculosis (strain CDC 1551 / Oshkosh).